Consider the following 507-residue polypeptide: Hippocampus abundant transcript-like protein 1 (507 aa).

The interval 1–27 (MSTDGESPEEPRWKAVASPKASTMPEK) is disordered. The Extracellular portion of the chain corresponds to 1 to 51 (MSTDGESPEEPRWKAVASPKASTMPEKRGSAQAASGSWLQGFGHPSVYHAA). A helical transmembrane segment spans residues 52 to 72 (FVIFLEFFAWGLLTTPMLTVL). At 73–84 (HETFPQHTFLMN) the chain is on the cytoplasmic side. The helical transmembrane segment at 85-105 (GLIQGVKGLLSFLSAPLIGAL) threads the bilayer. The Extracellular segment spans residues 106-113 (SDVWGRKP). Residues 114–134 (FLLGTVFFTCFPIPLMRINPW) form a helical membrane-spanning segment. The Cytoplasmic portion of the chain corresponds to 135-136 (WY). Residues 137–157 (FGMISVSGVFSVTFSVIFAYV) form a helical membrane-spanning segment. The Extracellular portion of the chain corresponds to 158 to 170 (ADFTQEHERSTAY). The chain crosses the membrane as a helical span at residues 171–191 (GWVSATFAASLVSSPAIGTYL). Residues 192 to 198 (SANYGDS) lie on the Cytoplasmic side of the membrane. The chain crosses the membrane as a helical span at residues 199 to 219 (LVVLVATLVALLDICFILIAV). Topologically, residues 220–257 (PESLSEKIRPASWGAQISWKQADPFASLKKVGKDSTVL) are extracellular. A helical membrane pass occupies residues 258-278 (LICITVFLSYLPEAGQYSSFF). Over 279 to 283 (LYLRQ) the chain is Cytoplasmic. Residues 284-304 (VIGFGSVKIVAFIAMVGILSI) form a helical membrane-spanning segment. Residues 305 to 323 (VAQTVFLSKLMRSLGNKNT) are Extracellular-facing. The helical transmembrane segment at 324–344 (VLLGLGFQMLQLAWYGFGSQA) threads the bilayer. Residues 345–347 (WMM) lie on the Cytoplasmic side of the membrane. Residues 348–368 (WAAGTVAAMSSITFPAVSALI) traverse the membrane as a helical segment. Topologically, residues 369-389 (SRNAESDQQGVAQGIVTGIRG) are extracellular. The chain crosses the membrane as a helical span at residues 390–410 (LCNGLGPALYGFIFYMFHVEL). The Cytoplasmic portion of the chain corresponds to 411–430 (SELGPKLNSDDDPLQGAFIP). A helical membrane pass occupies residues 431–451 (GPPFLFGACIVLMSFLVALFI). The Extracellular portion of the chain corresponds to 452–507 (PEYRKTSGVQKHNNSTSGSLSTPPERGSDEDIEPLLQDSSIWELSFEEPGNQCTEL). Polar residues predominate over residues 459–473 (GVQKHNNSTSGSLST). A disordered region spans residues 459–483 (GVQKHNNSTSGSLSTPPERGSDEDI). 2 N-linked (GlcNAc...) asparagine glycosylation sites follow: Asn464 and Asn465.

It belongs to the major facilitator superfamily.

The protein resides in the membrane. This is Hippocampus abundant transcript-like protein 1 from Mus musculus (Mouse).